Reading from the N-terminus, the 402-residue chain is Deoxyguanosinetriphosphate triphosphohydrolase-like protein (402 aa).

The 149-residue stretch at 69–217 (RLTHSLEVAQ…AAIADDIAYD (149 aa)) folds into the HD domain.

Belongs to the dGTPase family. Type 2 subfamily.

This is Deoxyguanosinetriphosphate triphosphohydrolase-like protein from Bradyrhizobium diazoefficiens (strain JCM 10833 / BCRC 13528 / IAM 13628 / NBRC 14792 / USDA 110).